A 353-amino-acid chain; its full sequence is Soluble interferon alpha/beta receptor OPG204 (353 aa).

The N-terminal stretch at 1–21 (MTMKMMVHIYFVSLSLLLLLF) is a signal peptide. Ig-like C2-type domains follow at residues 67-139 (LGEP…KNGD) and 157-239 (PKTY…IVVS). Disulfide bonds link cysteine 75–cysteine 131 and cysteine 174–cysteine 223. N-linked (GlcNAc...) asparagine; by host glycosylation is found at asparagine 119, asparagine 184, asparagine 263, asparagine 271, and asparagine 323. The 100-residue stretch at 248 to 347 (PSQDHRFKLI…HNYYFEKTLT (100 aa)) folds into the Ig-like V-type domain. The cysteines at positions 274 and 335 are disulfide-linked.

The protein belongs to the interleukin-1 receptor family. Interacts with host IFNA1.

It is found in the secreted. In terms of biological role, counteracts the antiviral effects of host IFN-alpha/beta and key IFN-inducible proteins involved in viral RNA degradation suxh as host OAS1. Acts as a soluble IFN-alpha receptor and thus inhibits the interaction between host IFN-alpha and its receptor. In Homo sapiens (Human), this protein is Soluble interferon alpha/beta receptor OPG204 (OPG204).